The sequence spans 261 residues: MSRRRGPRRRGPRRRPRPGAPAVPRPGAPAVPRPGALPTADSQMVPAYDSGTAVESAPAASSLLRRWLLVPQADDSDDADYAGNDDAEWANSPPSEGGGKAPEAPHAAPAAACPPPPPRKERGPQRPLPPHLALRLRTTTEYLARLSLRRRRPPASPPADAPRGKVCFSPRVQVRHLVAWETAARLARRGSWARERADRDRFRRRVAAAEAVIGPCLEPEARARARARARAHEDGGPAEEEEAAAAARGSSAAAGPGRRAV.

Over residues 1-17 the composition is skewed to basic residues; the sequence is MSRRRGPRRRGPRRRPR. The segment at 1-19 is required for nucleolar localization; the sequence is MSRRRGPRRRGPRRRPRPG. Disordered regions lie at residues 1–59, 75–135, and 145–164; these read MSRR…SAPA, DSDD…LALR, and RLSLRRRRPPASPPADAPRG. 4 repeats span residues 3–7, 8–12, 16–23, and 24–31; these read RRRGP and PRPGAPAV. Positions 3–12 are 2 X 5 AA tandem repeats of R-R-R-G-P; the sequence is RRRGPRRRGP. Residues 16-31 form a 2 X 8 AA tandem repeats of P-R-P-G-A-P-A-V region; that stretch reads PRPGAPAVPRPGAPAV. The span at 18–32 shows a compositional bias: pro residues; sequence PGAPAVPRPGAPAVP. Positions 75–88 are enriched in acidic residues; that stretch reads DSDDADYAGNDDAE. A compositionally biased stretch (low complexity) spans 101-111; that stretch reads APEAPHAAPAA. Positions 128 to 137 match the Nuclear export signal motif; that stretch reads LPPHLALRLR. The binding to PP1CA stretch occupies residues 163–176; it reads RGKVCFSPRVQVRH. Residues 163-176 are interaction with host PPP1CA; that stretch reads RGKVCFSPRVQVRH. Residues 178-261 form an important for interferon resistance region; that stretch reads VAWETAARLA…AAAGPGRRAV (84 aa). The Bipartite nuclear localization signal signature appears at 188–206; sequence RRGSWARERADRDRFRRRV. Residues 206–221 form an interaction with host EIF2S1/EIF-2ALPHA region; that stretch reads VAAAEAVIGPCLEPEA. Residues 223-261 form a disordered region; it reads ARARARARAHEDGGPAEEEEAAAAARGSSAAAGPGRRAV. The span at 244–261 shows a compositional bias: low complexity; it reads AAAARGSSAAAGPGRRAV.

The protein belongs to the PPP1R15 family. In terms of assembly, interacts with host PPP1CA to form a high-molecular-weight complex that dephosphorylates EIF2S1/eIF-2alpha. Interacts with host EIF2S1/eIF-2alpha; this interaction is crucial for the specific dephosphorylation of EIF2S1/eIF-2alpha by PPP1CA.

Its subcellular location is the host cytoplasm. The protein resides in the host nucleus. It localises to the host nucleolus. It is found in the virion. Plays essential roles in viral nuclear egress to mediate capsid transit across the nuclear membrane and also in the inhibition of host immune response and integrated stress response (ISR). Facilitates nuclear egress cooperatively with host C1QBP and protein kinase C/PKC to induce lamin A/C phosphorylation and subsequent reorganization. In turn, lamina disassembles and nuclear egress occurs. Recruits the serine/threonine-protein phosphatase PPP1CA/PP1-alpha to dephosphorylate the translation initiation factor EIF2S1/eIF-2alpha, thereby couteracting the host shutoff of protein synthesis involving double-stranded RNA-dependent protein kinase EIF2AK2/PKR. Also down-modulates the host MHC class II proteins cell surface expression. Acts as a neurovirulence factor that has a profound effect on the growth of the virus in central nervous system tissue, probably through its ability to maintain an environment favorable for viral replication. The protein is Neurovirulence factor ICP34.5 (RL1) of Human herpesvirus 2 (strain HG52) (HHV-2).